The chain runs to 251 residues: Myozenin-3 (251 aa).

The residue at position 31 (serine 31) is a Phosphoserine. A binding to ACTN2, PPP3CA and TCAP region spans residues leucine 50–alanine 67. Positions alanine 67 to proline 110 are binding to FLNC. The segment at arginine 79–tyrosine 102 is disordered. The binding to ACTN2 stretch occupies residues proline 186 to glycine 207.

The protein belongs to the myozenin family. In terms of assembly, interacts with ACTN2, LDB3, FLNC, PPP3CA and TCAP. Expressed specifically in skeletal muscle. Not detected in heart.

It is found in the cytoplasm. Its subcellular location is the myofibril. The protein localises to the sarcomere. The protein resides in the z line. Its function is as follows. Myozenins may serve as intracellular binding proteins involved in linking Z line proteins such as alpha-actinin, gamma-filamin, TCAP/telethonin, LDB3/ZASP and localizing calcineurin signaling to the sarcomere. Plays an important role in the modulation of calcineurin signaling. May play a role in myofibrillogenesis. In Homo sapiens (Human), this protein is Myozenin-3.